The sequence spans 113 residues: Cell cycle protein GpsB (113 aa).

Residues 37–63 (KDYETYATLVKSLRQEIADLKEELTRK) adopt a coiled-coil conformation. The segment at 61 to 82 (TRKPQVSSAPSPSHPDPIDVAA) is disordered.

The protein belongs to the GpsB family. Forms polymers through the coiled coil domains. Interacts with PBP1, MreC and EzrA.

The protein localises to the cytoplasm. Functionally, divisome component that associates with the complex late in its assembly, after the Z-ring is formed, and is dependent on DivIC and PBP2B for its recruitment to the divisome. Together with EzrA, is a key component of the system that regulates PBP1 localization during cell cycle progression. Its main role could be the removal of PBP1 from the cell pole after pole maturation is completed. Also contributes to the recruitment of PBP1 to the division complex. Not essential for septum formation. This is Cell cycle protein GpsB from Streptococcus pneumoniae (strain ATCC 700669 / Spain 23F-1).